Consider the following 212-residue polypeptide: MAKITKLEVQKRNKERVNVFLDEDYAFSISAELIYKEGIKVKDSVDSEKLKVLANKDAIIKCREAAIKSIERNLKTEKQVRDKLNLKGYDEEAITKAIDFLKEYNFLDDKDYANKFVKDKLKCQGSNKIRYSLMQKGVSKDVIEEELSGIDKENEKENALVLAQKKVNNLRKTESDTYKISNKLYRFLLSKGYGYDIIKDVVKEAMNFEFYD.

It belongs to the RecX family.

Its subcellular location is the cytoplasm. Functionally, modulates RecA activity. The chain is Regulatory protein RecX from Clostridium botulinum (strain Alaska E43 / Type E3).